A 389-amino-acid polypeptide reads, in one-letter code: Probable serine/threonine-protein kinase PBL24 (389 aa).

The disordered stretch occupies residues 1–36 (MSCFLGPSTNNKSRENEGSSMAAPYEQQNLPRNDRR). C3 carries S-palmitoyl cysteine lipidation. The region spanning 71–348 (FRQEFLIGEG…SDVVTALSFM (278 aa)) is the Protein kinase domain. ATP-binding positions include 77 to 85 (IGEGGFGRV) and K100. D198 (proton acceptor) is an active-site residue. A phosphoserine mark is found at S202 and S232. Residue T238 is modified to Phosphothreonine. At Y246 the chain carries Phosphotyrosine.

Belongs to the protein kinase superfamily. Ser/Thr protein kinase family.

It localises to the cell membrane. It carries out the reaction L-seryl-[protein] + ATP = O-phospho-L-seryl-[protein] + ADP + H(+). It catalyses the reaction L-threonyl-[protein] + ATP = O-phospho-L-threonyl-[protein] + ADP + H(+). In terms of biological role, may be involved in plant defense signaling. This Arabidopsis thaliana (Mouse-ear cress) protein is Probable serine/threonine-protein kinase PBL24.